The chain runs to 488 residues: Beta-1,3-glucan-binding protein (488 aa).

An N-terminal signal peptide occupies residues 1–17 (MFVTFICFLACLTCSYG). Residues 18–135 (QPRAQQYVVP…GTPADTSLEP (118 aa)) form a binds to curdlan, laminarihexaose and laminarin. The complex formation with laminarin induces self-association of the complexes into a macro structure, likely containing six protein and three laminarin molecules. The macro structures may form a platform on a microbial surface for recruitment of downstream proteases, as a means of amplification of the initial signal of pathogen recognition for the activation of the phenoloxidase cascade region. The interval 18–198 (QPRAQQYVVP…LKDLANWEAE (181 aa)) is binds to curdlan, lipopolysaccharide and lipoteichoic acid, activates the phenoloxidase cascade and is resistant to proteolytic degradation by trypsin or chymotrypsin, but is not as effective as the full-length protein in aggregation of microorganisms. Positions 24–123 (YVVPSAKLEA…GEWTVTEFVN (100 aa)) constitute a CBM39 domain. Positions 24–127 (YVVPSAKLEA…VTEFVNEDGT (104 aa)) are binds to laminarihexaose and laminarin. Substrate contacts are provided by residues D72, 99–101 (WTY), and R110. The disordered stretch occupies residues 125 to 158 (DGTPADTSLEPTTAPTPVRPDQPNQPIPTHRPDP). Over residues 129–139 (ADTSLEPTTAP) the composition is skewed to polar residues. A compositionally biased stretch (pro residues) spans 141–150 (PVRPDQPNQP). The region spanning 144 to 488 (PDQPNQPIPT…KVDYVRVYAL (345 aa)) is the GH16 domain. The interval 199–488 (VKFPEEPDYP…KVDYVRVYAL (290 aa)) is binds to laminarin, but not to curdlan, does not activate the phenoloxidase cascade, is susceptible to proteinase digestion by trypsin or chymotrypsin and does not cause aggregation of microorganisms. N-linked (GlcNAc...) asparagine glycans are attached at residues N373 and N453.

It belongs to the insect beta-1,3-glucan binding protein family. Monomer. Post-translationally, the N-terminus is blocked. In terms of tissue distribution, fat body and hemolymph.

It localises to the secreted. Its function is as follows. Involved in the recognition of invading microorganisms causing their aggregation. Activates the phenoloxidase cascade. Binds specifically to beta-1,3-glucan. Binds to curdlan, a linear water-insoluble beta-1,3-glucan polysaccharide, and to laminarin, a water-soluble beta-1,3-glucan polysaccharide containing beta-1,6 branches. Also binds to lipopolysaccharide and lipoteichoic acid. The chain is Beta-1,3-glucan-binding protein from Plodia interpunctella (Indianmeal moth).